A 181-amino-acid chain; its full sequence is Protein GrpE (181 aa).

Polar residues predominate over residues Met1–Ala13. A disordered region spans residues Met1 to Glu39. Residues Gln21–Glu39 show a composition bias toward low complexity.

Belongs to the GrpE family. Homodimer.

It localises to the cytoplasm. Participates actively in the response to hyperosmotic and heat shock by preventing the aggregation of stress-denatured proteins, in association with DnaK and GrpE. It is the nucleotide exchange factor for DnaK and may function as a thermosensor. Unfolded proteins bind initially to DnaJ; upon interaction with the DnaJ-bound protein, DnaK hydrolyzes its bound ATP, resulting in the formation of a stable complex. GrpE releases ADP from DnaK; ATP binding to DnaK triggers the release of the substrate protein, thus completing the reaction cycle. Several rounds of ATP-dependent interactions between DnaJ, DnaK and GrpE are required for fully efficient folding. The chain is Protein GrpE from Burkholderia lata (strain ATCC 17760 / DSM 23089 / LMG 22485 / NCIMB 9086 / R18194 / 383).